The chain runs to 431 residues: Serine--tRNA ligase (431 aa).

L-serine is bound at residue 237 to 239 (TAE). 268-270 (RSE) provides a ligand contact to ATP. Position 291 (Glu-291) interacts with L-serine. 355–358 (EISS) provides a ligand contact to ATP. L-serine is bound at residue Ser-390.

It belongs to the class-II aminoacyl-tRNA synthetase family. Type-1 seryl-tRNA synthetase subfamily. In terms of assembly, homodimer. The tRNA molecule binds across the dimer.

Its subcellular location is the cytoplasm. It catalyses the reaction tRNA(Ser) + L-serine + ATP = L-seryl-tRNA(Ser) + AMP + diphosphate + H(+). The catalysed reaction is tRNA(Sec) + L-serine + ATP = L-seryl-tRNA(Sec) + AMP + diphosphate + H(+). It participates in aminoacyl-tRNA biosynthesis; selenocysteinyl-tRNA(Sec) biosynthesis; L-seryl-tRNA(Sec) from L-serine and tRNA(Sec): step 1/1. Functionally, catalyzes the attachment of serine to tRNA(Ser). Is also able to aminoacylate tRNA(Sec) with serine, to form the misacylated tRNA L-seryl-tRNA(Sec), which will be further converted into selenocysteinyl-tRNA(Sec). This is Serine--tRNA ligase from Neisseria meningitidis serogroup C (strain 053442).